Consider the following 84-residue polypeptide: Small ribosomal subunit protein bS16c (84 aa).

It belongs to the bacterial ribosomal protein bS16 family.

The protein localises to the plastid. Its subcellular location is the chloroplast. The protein is Small ribosomal subunit protein bS16c of Mesostigma viride (Green alga).